We begin with the raw amino-acid sequence, 616 residues long: MKKYDCLVIGAGHAGLEAAFILAKKKYKVALFVLDKKLVGNMPCNPSIGGPAKGIVTREIDALGGMQAIAADNTQLQMKLLNSSKGAGTWALRAQIDKLEYSKWFLNRIEENEYIDLIDKEVNSIKFVNQKVCGVYTVDNQFFESNYLIVTTGTFLDSSIHIGHKVIKKGPDDFNGSYLLAKQIKELDFQTIRLKTGTPPRILKNSIDYSKLQIEPGTNKKYSFSHFDRKFLDFNKQEVCYLAFTNNKIHEIINNNLDKSAMYSGFITGTGPRYCPSIEDKVVRFNDKERHQLFVEPESKHLDTIYLGGLSSSLPEDVQEQIVKNIVGFENAVIKKYAYAIEYDAINPIQLYPTLETKKIKGLFFAGQINGTSGYEEAACQGLMAGINVLCQLENREPLVLKRNEAYIGVLIEDLINKEITDPYRLLTSRAEYRLELRNDNADQRLLKYGYELGLISQSHWDEYNKNLENFNNTLKELETSTLKNVKEFKYNSRKTNTTLYEILKRPDYSFIDMEPFLKNKNTLDEYWKDKVDIYIKYGGYIKSQQKIINDTKNIDNIKLSSISDYKDVPNISLEARDKLNKVKPLTLGQASRVSGINLVDLINIKLYLENKKKQT.

Residues 10–15 (GAGHAG), Val122, and Ser177 contribute to the FAD site. An NAD(+)-binding site is contributed by 271-285 (GPRYCPSIEDKVVRF). Gln368 provides a ligand contact to FAD.

The protein belongs to the MnmG family. As to quaternary structure, homodimer. Heterotetramer of two MnmE and two MnmG subunits. FAD serves as cofactor.

The protein resides in the cytoplasm. In terms of biological role, NAD-binding protein involved in the addition of a carboxymethylaminomethyl (cmnm) group at the wobble position (U34) of certain tRNAs, forming tRNA-cmnm(5)s(2)U34. This chain is tRNA uridine 5-carboxymethylaminomethyl modification enzyme MnmG, found in Malacoplasma penetrans (strain HF-2) (Mycoplasma penetrans).